Reading from the N-terminus, the 100-residue chain is Large ribosomal subunit protein bL28 (100 aa).

Belongs to the bacterial ribosomal protein bL28 family.

The polypeptide is Large ribosomal subunit protein bL28 (Gluconacetobacter diazotrophicus (strain ATCC 49037 / DSM 5601 / CCUG 37298 / CIP 103539 / LMG 7603 / PAl5)).